A 401-amino-acid polypeptide reads, in one-letter code: Sulfate adenylyltransferase (401 aa).

Belongs to the sulfate adenylyltransferase family.

It catalyses the reaction sulfate + ATP + H(+) = adenosine 5'-phosphosulfate + diphosphate. Its pathway is sulfur metabolism; hydrogen sulfide biosynthesis; sulfite from sulfate: step 1/3. The polypeptide is Sulfate adenylyltransferase (Alcanivorax borkumensis (strain ATCC 700651 / DSM 11573 / NCIMB 13689 / SK2)).